The primary structure comprises 277 residues: tRNA uridine(34) hydroxylase (277 aa).

Positions 126–221 constitute a Rhodanese domain; that stretch reads SSPDVHVIDT…YLETVRGDDS (96 aa). Cysteine 181 (cysteine persulfide intermediate) is an active-site residue.

It belongs to the TrhO family.

It carries out the reaction uridine(34) in tRNA + AH2 + O2 = 5-hydroxyuridine(34) in tRNA + A + H2O. In terms of biological role, catalyzes oxygen-dependent 5-hydroxyuridine (ho5U) modification at position 34 in tRNAs. The sequence is that of tRNA uridine(34) hydroxylase from Anaplasma marginale (strain Florida).